We begin with the raw amino-acid sequence, 76 residues long: Candidate secreted effector protein MPL124497 (76 aa).

The N-terminal stretch at 1–21 is a signal peptide; the sequence is MKLIIFAAISVAFMSFDQVLG.

Belongs to the CPGH1 family.

Its subcellular location is the secreted. The protein resides in the host cell. The protein localises to the host cytoplasm. It localises to the host nucleus. Functionally, rust effector delivered into infected tissues to modulate host functions and contribute to pathogen virulence. Enhances leaf colonization by the bacteria Pseudomonas syringae and the oomycete Hyaloperonospora arabidopsidis pathogens in an Arabidopsis thaliana infection model. This Melampsora larici-populina (strain 98AG31 / pathotype 3-4-7) (Poplar leaf rust fungus) protein is Candidate secreted effector protein MPL124497.